The sequence spans 482 residues: Adenylyltransferase and sulfurtransferase uba4 (482 aa).

Residues Glu33 to Ser57 are disordered. The span at Ala39 to Arg54 shows a compositional bias: polar residues. ATP contacts are provided by residues Gly98, Asp119, Ser126–Arg130, Lys143, and Asp187–Asn188. Zn(2+) contacts are provided by Cys236 and Cys239. The active-site Glycyl thioester intermediate; for adenylyltransferase activity is Cys253. Residues Cys315 and Cys318 each coordinate Zn(2+). The region spanning Ala366–Pro480 is the Rhodanese domain. Cys435 acts as the Cysteine persulfide intermediate; for sulfurtransferase activity in catalysis.

This sequence in the N-terminal section; belongs to the HesA/MoeB/ThiF family. UBA4 subfamily. Requires Zn(2+) as cofactor.

It localises to the cytoplasm. The protein localises to the cytosol. The catalysed reaction is [molybdopterin-synthase sulfur-carrier protein]-C-terminal Gly-Gly + ATP + H(+) = [molybdopterin-synthase sulfur-carrier protein]-C-terminal Gly-Gly-AMP + diphosphate. The enzyme catalyses [molybdopterin-synthase sulfur-carrier protein]-C-terminal Gly-Gly-AMP + S-sulfanyl-L-cysteinyl-[cysteine desulfurase] + AH2 = [molybdopterin-synthase sulfur-carrier protein]-C-terminal-Gly-aminoethanethioate + L-cysteinyl-[cysteine desulfurase] + A + AMP + 2 H(+). It functions in the pathway tRNA modification; 5-methoxycarbonylmethyl-2-thiouridine-tRNA biosynthesis. The protein operates within cofactor biosynthesis; molybdopterin biosynthesis. Its function is as follows. Plays a central role in 2-thiolation of mcm(5)S(2)U at tRNA wobble positions of cytosolic tRNA(Lys), tRNA(Glu) and tRNA(Gln). Also essential during biosynthesis of the molybdenum cofactor. Acts by mediating the C-terminal thiocarboxylation of sulfur carriers urm1 and mocs2a. Its N-terminus first activates urm1 and mocs2a as acyl-adenylates (-COAMP), then the persulfide sulfur on the catalytic cysteine is transferred to urm1 and mocs2a to form thiocarboxylation (-COSH) of their C-terminus. The reaction probably involves hydrogen sulfide that is generated from the persulfide intermediate and that acts as a nucleophile towards urm1 and mocs2a. Subsequently, a transient disulfide bond is formed. Does not use thiosulfate as sulfur donor; nfs1 probably acting as a sulfur donor for thiocarboxylation reactions. The sequence is that of Adenylyltransferase and sulfurtransferase uba4 from Emericella nidulans (strain FGSC A4 / ATCC 38163 / CBS 112.46 / NRRL 194 / M139) (Aspergillus nidulans).